The sequence spans 503 residues: Probable cytosol aminopeptidase (503 aa).

K270 and D275 together coordinate Mn(2+). The active site involves K282. Mn(2+) contacts are provided by D293, D352, and E354. Residue R356 is part of the active site.

The protein belongs to the peptidase M17 family. It depends on Mn(2+) as a cofactor.

It localises to the cytoplasm. The enzyme catalyses Release of an N-terminal amino acid, Xaa-|-Yaa-, in which Xaa is preferably Leu, but may be other amino acids including Pro although not Arg or Lys, and Yaa may be Pro. Amino acid amides and methyl esters are also readily hydrolyzed, but rates on arylamides are exceedingly low.. It carries out the reaction Release of an N-terminal amino acid, preferentially leucine, but not glutamic or aspartic acids.. In terms of biological role, presumably involved in the processing and regular turnover of intracellular proteins. Catalyzes the removal of unsubstituted N-terminal amino acids from various peptides. The chain is Probable cytosol aminopeptidase from Yersinia pseudotuberculosis serotype O:1b (strain IP 31758).